Reading from the N-terminus, the 224-residue chain is Heme response regulator HssR (224 aa).

Residues Q3–L116 enclose the Response regulatory domain. D52 carries the post-translational modification 4-aspartylphosphate. A DNA-binding region (ompR/PhoB-type) is located at residues N124–N222.

Post-translationally, phosphorylated by HssS.

The protein resides in the cytoplasm. In terms of biological role, member of the two-component regulatory system HssS/HssR involved in intracellular heme homeostasis and tempering of staphylococcal virulence. Phosphorylated HssR binds to a direct repeat sequence within hrtAB promoter and activates the expression of hrtAB, an efflux pump, in response to extracellular heme, hemin, hemoglobin or blood. The chain is Heme response regulator HssR (hssR) from Staphylococcus aureus (strain bovine RF122 / ET3-1).